The sequence spans 493 residues: Galactose-1-phosphate uridylyltransferase (493 aa).

This sequence belongs to the galactose-1-phosphate uridylyltransferase type 2 family.

The protein localises to the cytoplasm. The catalysed reaction is alpha-D-galactose 1-phosphate + UDP-alpha-D-glucose = alpha-D-glucose 1-phosphate + UDP-alpha-D-galactose. Its pathway is carbohydrate metabolism; galactose metabolism. The chain is Galactose-1-phosphate uridylyltransferase from Streptococcus pneumoniae (strain CGSP14).